We begin with the raw amino-acid sequence, 257 residues long: Imidazole glycerol phosphate synthase subunit HisF (257 aa).

Active-site residues include D12 and D131.

This sequence belongs to the HisA/HisF family. In terms of assembly, heterodimer of HisH and HisF.

The protein localises to the cytoplasm. The catalysed reaction is 5-[(5-phospho-1-deoxy-D-ribulos-1-ylimino)methylamino]-1-(5-phospho-beta-D-ribosyl)imidazole-4-carboxamide + L-glutamine = D-erythro-1-(imidazol-4-yl)glycerol 3-phosphate + 5-amino-1-(5-phospho-beta-D-ribosyl)imidazole-4-carboxamide + L-glutamate + H(+). It functions in the pathway amino-acid biosynthesis; L-histidine biosynthesis; L-histidine from 5-phospho-alpha-D-ribose 1-diphosphate: step 5/9. Functionally, IGPS catalyzes the conversion of PRFAR and glutamine to IGP, AICAR and glutamate. The HisF subunit catalyzes the cyclization activity that produces IGP and AICAR from PRFAR using the ammonia provided by the HisH subunit. This Burkholderia mallei (strain NCTC 10247) protein is Imidazole glycerol phosphate synthase subunit HisF.